The primary structure comprises 121 residues: Large ribosomal subunit protein uL22c (121 aa).

This sequence belongs to the universal ribosomal protein uL22 family. As to quaternary structure, part of the 50S ribosomal subunit.

The protein resides in the plastid. It localises to the chloroplast. This protein binds specifically to 23S rRNA. Its function is as follows. The globular domain of the protein is located near the polypeptide exit tunnel on the outside of the subunit, while an extended beta-hairpin is found that lines the wall of the exit tunnel in the center of the 70S ribosome. This is Large ribosomal subunit protein uL22c (rpl22) from Lemna minor (Common duckweed).